Reading from the N-terminus, the 425-residue chain is Oxalate decarboxylase ARB_02208 (425 aa).

Residues 1-19 (MKFGSALVAAVAAVAGVAA) form the signal peptide. Residues 73–236 (FSLSKTRMFH…FNISTGGTFD (164 aa)) form the Cupin type-1 1 domain. 4 residues coordinate Mn(2+): histidine 116, histidine 118, glutamate 122, and histidine 161. Residues asparagine 228, asparagine 247, asparagine 254, and asparagine 265 are each glycosylated (N-linked (GlcNAc...) asparagine). The Cupin type-1 2 domain occupies 270–414 (FHIRDAPEIQ…AINVPIDVID (145 aa)). Positions 317, 319, 324, and 363 each coordinate Mn(2+). An N-linked (GlcNAc...) asparagine glycan is attached at asparagine 367. The active-site Proton donor is glutamate 378.

Mn(2+) serves as cofactor.

It localises to the secreted. The enzyme catalyses oxalate + H(+) = formate + CO2. Functionally, converts oxalate to formate and CO(2) in an O(2)-dependent reaction. Can also catalyze minor side reactions: oxalate oxidation to produce H(2)O(2), and oxalate-dependent, H(2)O(2)-independent dye oxidations. The protein is Oxalate decarboxylase ARB_02208 of Arthroderma benhamiae (strain ATCC MYA-4681 / CBS 112371) (Trichophyton mentagrophytes).